We begin with the raw amino-acid sequence, 564 residues long: Dihydroxy-acid dehydratase (564 aa).

Cys53 contributes to the [2Fe-2S] cluster binding site. Asp85 is a binding site for Mg(2+). Cys126 contacts [2Fe-2S] cluster. Mg(2+) contacts are provided by Asp127 and Lys128. Position 128 is an N6-carboxylysine (Lys128). Residue Cys203 coordinates [2Fe-2S] cluster. A Mg(2+)-binding site is contributed by Glu454. Residue Ser480 is the Proton acceptor of the active site.

This sequence belongs to the IlvD/Edd family. In terms of assembly, homodimer. Requires [2Fe-2S] cluster as cofactor. Mg(2+) serves as cofactor.

It carries out the reaction (2R)-2,3-dihydroxy-3-methylbutanoate = 3-methyl-2-oxobutanoate + H2O. The catalysed reaction is (2R,3R)-2,3-dihydroxy-3-methylpentanoate = (S)-3-methyl-2-oxopentanoate + H2O. It functions in the pathway amino-acid biosynthesis; L-isoleucine biosynthesis; L-isoleucine from 2-oxobutanoate: step 3/4. It participates in amino-acid biosynthesis; L-valine biosynthesis; L-valine from pyruvate: step 3/4. Functions in the biosynthesis of branched-chain amino acids. Catalyzes the dehydration of (2R,3R)-2,3-dihydroxy-3-methylpentanoate (2,3-dihydroxy-3-methylvalerate) into 2-oxo-3-methylpentanoate (2-oxo-3-methylvalerate) and of (2R)-2,3-dihydroxy-3-methylbutanoate (2,3-dihydroxyisovalerate) into 2-oxo-3-methylbutanoate (2-oxoisovalerate), the penultimate precursor to L-isoleucine and L-valine, respectively. This chain is Dihydroxy-acid dehydratase, found in Leifsonia xyli subsp. xyli (strain CTCB07).